The primary structure comprises 379 residues: Pectin lyase A (379 aa).

The signal sequence occupies residues 1–20 (MKYSTIFSAAAAVFAGSAAA). Cystine bridges form between Cys83-Cys102 and Cys92-Cys226. An O-linked (Man) threonine glycan is attached at Thr88. A glycan (N-linked (GlcNAc...) asparagine) is linked at Asn129. Arg256 is an active-site residue. Cys322 and Cys330 form a disulfide bridge. An O-linked (Man) serine; in strain 4M-147 glycan is attached at Ser368.

It belongs to the polysaccharide lyase 1 family. N-glycosylated at Asn-129 and O-glycosylated at Thr-88 when expressed in Aspergillus nidulans. The protein from strain 4M-147 is O-glycosylated at Thr-88 and Ser-368. PubMed:9195887 modeled GalNAc at the O-glycosylation site, a glycosylation not observed in fungi. The O-linked saccharide is probably mannose.

It is found in the secreted. It carries out the reaction Eliminative cleavage of (1-&gt;4)-alpha-D-galacturonan methyl ester to give oligosaccharides with 4-deoxy-6-O-methyl-alpha-D-galact-4-enuronosyl groups at their non-reducing ends.. In terms of biological role, pectinolytic enzymes consist of four classes of enzymes: pectin lyase, polygalacturonase, pectin methylesterase and rhamnogalacturonase. Among pectinolytic enzymes, pectin lyase is the most important in depolymerization of pectin, since it cleaves internal glycosidic bonds of highly methylated pectins. The protein is Pectin lyase A (pelA) of Aspergillus niger.